We begin with the raw amino-acid sequence, 140 residues long: ATP synthase epsilon chain (140 aa).

It belongs to the ATPase epsilon chain family. F-type ATPases have 2 components, CF(1) - the catalytic core - and CF(0) - the membrane proton channel. CF(1) has five subunits: alpha(3), beta(3), gamma(1), delta(1), epsilon(1). CF(0) has three main subunits: a, b and c.

It localises to the cell inner membrane. Functionally, produces ATP from ADP in the presence of a proton gradient across the membrane. This chain is ATP synthase epsilon chain, found in Stenotrophomonas maltophilia (strain R551-3).